Reading from the N-terminus, the 369-residue chain is Flagellar P-ring protein (369 aa).

Residues 1-23 (MIKQFAVSLLLVLLTLVTTTASA) form the signal peptide.

This sequence belongs to the FlgI family. As to quaternary structure, the basal body constitutes a major portion of the flagellar organelle and consists of four rings (L,P,S, and M) mounted on a central rod.

Its subcellular location is the periplasm. It localises to the bacterial flagellum basal body. Functionally, assembles around the rod to form the L-ring and probably protects the motor/basal body from shearing forces during rotation. The polypeptide is Flagellar P-ring protein (Photorhabdus laumondii subsp. laumondii (strain DSM 15139 / CIP 105565 / TT01) (Photorhabdus luminescens subsp. laumondii)).